Reading from the N-terminus, the 194-residue chain is Peptidyl-tRNA hydrolase (194 aa).

Residue Y17 coordinates tRNA. Residue H22 is the Proton acceptor of the active site. Positions 68, 70, and 116 each coordinate tRNA.

The protein belongs to the PTH family. Monomer.

It localises to the cytoplasm. It catalyses the reaction an N-acyl-L-alpha-aminoacyl-tRNA + H2O = an N-acyl-L-amino acid + a tRNA + H(+). Functionally, hydrolyzes ribosome-free peptidyl-tRNAs (with 1 or more amino acids incorporated), which drop off the ribosome during protein synthesis, or as a result of ribosome stalling. Its function is as follows. Catalyzes the release of premature peptidyl moieties from peptidyl-tRNA molecules trapped in stalled 50S ribosomal subunits, and thus maintains levels of free tRNAs and 50S ribosomes. The sequence is that of Peptidyl-tRNA hydrolase from Chromohalobacter salexigens (strain ATCC BAA-138 / DSM 3043 / CIP 106854 / NCIMB 13768 / 1H11).